A 343-amino-acid chain; its full sequence is Glyceraldehyde-3-phosphate dehydrogenase 1 (343 aa).

NAD(+)-binding positions include 13–14 (RI), D35, R79, and S121. D-glyceraldehyde 3-phosphate contacts are provided by residues 154–156 (SCT), T185, 214–215 (TG), and R237. C155 functions as the Nucleophile in the catalytic mechanism. NAD(+) is bound at residue N319.

It belongs to the glyceraldehyde-3-phosphate dehydrogenase family. As to quaternary structure, homotetramer.

The protein resides in the cytoplasm. The catalysed reaction is D-glyceraldehyde 3-phosphate + phosphate + NAD(+) = (2R)-3-phospho-glyceroyl phosphate + NADH + H(+). The protein operates within carbohydrate degradation; glycolysis; pyruvate from D-glyceraldehyde 3-phosphate: step 1/5. Catalyzes the oxidative phosphorylation of glyceraldehyde 3-phosphate (G3P) to 1,3-bisphosphoglycerate (BPG) using the cofactor NAD. The first reaction step involves the formation of a hemiacetal intermediate between G3P and a cysteine residue, and this hemiacetal intermediate is then oxidized to a thioester, with concomitant reduction of NAD to NADH. The reduced NADH is then exchanged with the second NAD, and the thioester is attacked by a nucleophilic inorganic phosphate to produce BPG. The sequence is that of Glyceraldehyde-3-phosphate dehydrogenase 1 (gap1) from Nostoc sp. (strain PCC 7120 / SAG 25.82 / UTEX 2576).